Reading from the N-terminus, the 32-residue chain is DNA-binding protein HU (32 aa).

It belongs to the bacterial histone-like protein family.

Functionally, histone-like DNA-binding protein which is capable of wrapping DNA to stabilize it, and thus to prevent its denaturation under extreme environmental conditions. The protein is DNA-binding protein HU (hup) of Synechocystis sp. (strain PCC 6701).